The primary structure comprises 927 residues: Band 3 anion transport protein (927 aa).

M1 is subject to N-acetylmethionine. Residues 1–420 (MGDMQDHEKV…LSDITDALSP (420 aa)) are Cytoplasmic-facing. S18 is modified (phosphoserine). Phosphotyrosine occurs at positions 31 and 56. The globular stretch occupies residues 69–303 (SQVYVELQEL…LGRAAATLMT (235 aa)). An interaction with ANK1 region spans residues 190–199 (AVLTRSGAPS). A phosphoserine mark is found at S199 and S222. The segment at 317–370 (RGELLSSLDSFLDCSLVLPPTEAPSEKALLNLVPVQKELLRKRYLPRPAKPDPN) is dimerization arm. Residues 367–390 (PDPNLYEALDGGKEGPGDEDDPLR) are disordered. Phosphotyrosine is present on Y372. The chain crosses the membrane as a helical span at residues 421–444 (QVLAAVIFIYFAALSPAVTFGGLL). Residues 445–452 (GEKTRNLM) are Extracellular-facing. Residues 453–473 (GVSELLISTAVQGILFALLGA) form a helical membrane-spanning segment. Residues 474–476 (QPL) lie on the Cytoplasmic side of the membrane. The chain crosses the membrane as a discontinuously helical span at residues 477 to 493 (LVLGFSGPLLVFEEAFY). Topologically, residues 494 to 502 (SFCESNNLE) are extracellular. A helical transmembrane segment spans residues 503 to 523 (YIVGRAWIGFWLILLVVLVVA). Residues 524–535 (FEGSFLVQYISR) are Cytoplasmic-facing. Residues 536–558 (YTQEIFSFLISLIFIYETFSKLI) traverse the membrane as a helical segment. At 559–586 (KIFQDYPLQESYAPVVMKPKPQGPVPNT) the chain is on the extracellular side. Residues 587–607 (ALLSLVLMVGTFLLAMMLRKF) traverse the membrane as a helical segment. Residues 608–618 (KNSTYFPGKLR) lie on the Cytoplasmic side of the membrane. A helical membrane pass occupies residues 619-639 (RVIGDFGVPISILIMVLVDTF). At 640 to 679 (IKNTYTQKLSVPDGLKVSNSSARGWVIHPLGLYNHFPKWM) the chain is on the extracellular side. N658 carries an N-linked (GlcNAc...) asparagine glycan. A helical transmembrane segment spans residues 680 to 700 (MFASVLPALLVFILIFLESQI). At 701-716 (TTLIVSKPERKMIKGS) the chain is on the cytoplasmic side. The chain crosses the membrane as a helical span at residues 717–735 (GFHLDLLLVVGMGGVAALF). The discontinuously helical transmembrane segment at 736 to 753 (GMPWLSATTVRSVTHANA) threads the bilayer. Residues 754 to 776 (LTVMGKASGPGAAAQIQEVKEQR) lie on the Cytoplasmic side of the membrane. The next 2 membrane-spanning stretches (helical) occupy residues 777 to 797 (ISGLLVSVLVGLSILMEPILS) and 798 to 816 (RIPLAVLFGIFLYMGITSL). Residues 817 to 854 (SGIQLFDRILLLFKPPKYHPDVPFVKRVKTWRMHLFTG) lie on the Cytoplasmic side of the membrane. The discontinuously helical intramembrane region spans 855-885 (IQIICLAVLWVVKSTPASLALPFVLILTVPL). C859 carries the S-palmitoyl cysteine lipid modification. Residues 886–927 (RRLLLPLIFRELELQCLDGDDAKVTFDEAEGLDEYDEVPMPV) are Cytoplasmic-facing. Y920 is subject to Phosphotyrosine.

This sequence belongs to the anion exchanger (TC 2.A.31) family. A dimer in solution, but in its membrane environment, it exists primarily as a mixture of dimers and tetramers and spans the membrane asymmetrically. Component of the ankyrin-1 complex in the erythrocyte, composed of ANK1, RHCE, RHAG, SLC4A1, EPB42, GYPA, GYPB and AQP1. Interacts with STOM; this interaction positively regulates SLC4A1 activity. Interacts with GYPA; a GYPA monomer is bound at each end of the SLC4A1 dimer forming a heterotetramer. Three SLC4A1 dimers (Band 3-I, Band 3-II and Band 3-III) participates in the ankyrin-1 complex. Interacts (via the cytoplasmic domain) with EPB42; this interaction is mediated by the SLC4A1 Band 3-I dimer. Interacts (via the cytoplasmic domain) directly with ANK1; this interaction is mediated by the SLC4A1 Band 3-II and Band 3-III dimers. As to quaternary structure, interacts with TMEM139. As to expression, kidney.

It is found in the cell membrane. The protein resides in the basolateral cell membrane. It carries out the reaction hydrogencarbonate(in) + chloride(out) = hydrogencarbonate(out) + chloride(in). In terms of biological role, functions both as a transporter that mediates electroneutral anion exchange across the cell membrane and as a structural protein. Component of the ankyrin-1 complex of the erythrocyte membrane; required for normal flexibility and stability of the erythrocyte membrane and for normal erythrocyte shape via the interactions of its cytoplasmic domain with cytoskeletal proteins, glycolytic enzymes, and hemoglobin. Functions as a transporter that mediates the 1:1 exchange of inorganic anions across the erythrocyte membrane. Mediates chloride-bicarbonate exchange in the kidney, and is required for normal acidification of the urine. The sequence is that of Band 3 anion transport protein from Rattus norvegicus (Rat).